A 184-amino-acid chain; its full sequence is Ras-related protein Rap-1b-like protein (184 aa).

Residue 10 to 18 participates in GTP binding; the sequence is GSRGVGKSA. An Effector region motif is present at residues 32–40; sequence YDPTIEDSY. GTP is bound by residues 57–61, 116–119, and 147–149; these read DTAGT, NKCD, and SAK. A lipid anchor (S-geranylgeranyl cysteine) is attached at Cys181. A propeptide spans 182 to 184 (removed in mature form); it reads QLL.

This sequence belongs to the small GTPase superfamily. Ras family.

The protein localises to the cell membrane. It localises to the cytoplasm. Its subcellular location is the cytosol. It carries out the reaction GTP + H2O = GDP + phosphate + H(+). Probable GTP-binding protein with intrinsic GTPase activity. The polypeptide is Ras-related protein Rap-1b-like protein (Homo sapiens (Human)).